We begin with the raw amino-acid sequence, 70 residues long: Sec-independent protein translocase protein TatA (70 aa).

The helical transmembrane segment at 1–21 (MGIGVWELLLLFLIVLVVFGT) threads the bilayer. The disordered stretch occupies residues 42-70 (MSENEDKPSEGGARTLEGEVVDKKEKDKV). The span at 57 to 70 (LEGEVVDKKEKDKV) shows a compositional bias: basic and acidic residues.

Belongs to the TatA/E family. As to quaternary structure, the Tat system comprises two distinct complexes: a TatABC complex, containing multiple copies of TatA, TatB and TatC subunits, and a separate TatA complex, containing only TatA subunits. Substrates initially bind to the TatABC complex, which probably triggers association of the separate TatA complex to form the active translocon.

The protein localises to the cell inner membrane. In terms of biological role, part of the twin-arginine translocation (Tat) system that transports large folded proteins containing a characteristic twin-arginine motif in their signal peptide across membranes. TatA could form the protein-conducting channel of the Tat system. In Methylococcus capsulatus (strain ATCC 33009 / NCIMB 11132 / Bath), this protein is Sec-independent protein translocase protein TatA.